The primary structure comprises 196 residues: MEVYNLRNTKEKILTATEQLIYKKGYTGTSINDILDETATGKGQFYYYFDSKKEACLAVIDNHVKIWQKHLLNGILSRDESPLANLKEMLDWIYSDHAQKKIYYGCPVGNLVIELSALDEDFRKPLEQLFSDLQKKIAENLSALTGLLVKQNLPAAHAIIAQIQGSLLLLKVTQDLNVLESNFDLLKTSFEKVGEK.

Residues arginine 7–tryptophan 67 form the HTH tetR-type domain. Residues serine 30–phenylalanine 49 constitute a DNA-binding region (H-T-H motif).

This is an uncharacterized protein from Lactococcus lactis subsp. lactis (Streptococcus lactis).